The primary structure comprises 431 residues: Histidinol dehydrogenase (431 aa).

The NAD(+) site is built by Tyr-130, Gln-192, and Asn-215. Substrate is bound by residues Ser-238, Gln-260, and His-263. Residues Gln-260 and His-263 each coordinate Zn(2+). Residues Glu-328 and His-329 each act as proton acceptor in the active site. Positions 329, 362, 416, and 421 each coordinate substrate. Residue Asp-362 coordinates Zn(2+). Zn(2+) is bound at residue His-421.

Belongs to the histidinol dehydrogenase family. Zn(2+) serves as cofactor.

The enzyme catalyses L-histidinol + 2 NAD(+) + H2O = L-histidine + 2 NADH + 3 H(+). It participates in amino-acid biosynthesis; L-histidine biosynthesis; L-histidine from 5-phospho-alpha-D-ribose 1-diphosphate: step 9/9. Its function is as follows. Catalyzes the sequential NAD-dependent oxidations of L-histidinol to L-histidinaldehyde and then to L-histidine. In Thermosynechococcus vestitus (strain NIES-2133 / IAM M-273 / BP-1), this protein is Histidinol dehydrogenase.